The chain runs to 715 residues: Targeting protein for Xklp2-B (715 aa).

The disordered stretch occupies residues 36–167 (NAENIPPDQK…LTMPATPTVL (132 aa)). Residues 47-56 (LSETSVNAEQ) show a composition bias toward polar residues. Over residues 85–103 (QTKRSARRMSKKHRQKILL) the composition is skewed to basic residues. Over residues 104–115 (KMKETHLEKETA) the composition is skewed to basic and acidic residues. Residues 141 to 152 (QPTSSHHGTTSP) are compositionally biased toward polar residues. S204 is modified (phosphoserine; by plk1). 2 disordered regions span residues 260–291 (PPTS…EEAS) and 314–337 (RSRQ…TNPK).

The protein belongs to the TPX2 family. In terms of assembly, associates with microtubules. Interacts with aurka and plk1. Interacts with kif15. In terms of processing, phosphorylated during mitosis. Hyperphosphorylated upon assembly of microtubules.

It is found in the nucleus. The protein localises to the cytoplasm. The protein resides in the cytoskeleton. Its subcellular location is the spindle. It localises to the spindle pole. Its function is as follows. Spindle assembly factor. Required for normal assembly of mitotic spindles. Mediates the binding kif15 and aurka to spindle microtubules. Required for targeting kif15 to microtubule minus ends. Activates aurka by promoting its autophosphorylation and protects the phosphorylated residue against dephosphorylation. The polypeptide is Targeting protein for Xklp2-B (tpx2-b) (Xenopus laevis (African clawed frog)).